A 35-amino-acid polypeptide reads, in one-letter code: Photosystem II reaction center protein T (35 aa).

Residues 3–23 (SVAYILIFTLCIGTIFFAIAF) traverse the membrane as a helical segment.

This sequence belongs to the PsbT family. In terms of assembly, PSII is composed of 1 copy each of membrane proteins PsbA, PsbB, PsbC, PsbD, PsbE, PsbF, PsbH, PsbI, PsbJ, PsbK, PsbL, PsbM, PsbT, PsbX, PsbY, PsbZ, Psb30/Ycf12, peripheral proteins PsbO, CyanoQ (PsbQ), PsbU, PsbV and a large number of cofactors. It forms dimeric complexes.

Its subcellular location is the cellular thylakoid membrane. In terms of biological role, found at the monomer-monomer interface of the photosystem II (PS II) dimer, plays a role in assembly and dimerization of PSII. PSII is a light-driven water plastoquinone oxidoreductase, using light energy to abstract electrons from H(2)O, generating a proton gradient subsequently used for ATP formation. The chain is Photosystem II reaction center protein T from Nostoc punctiforme (strain ATCC 29133 / PCC 73102).